The following is a 1237-amino-acid chain: Zinc finger protein 687 (1237 aa).

Disordered stretches follow at residues 1–80 and 96–330; these read MGDM…PDIS and EALA…PLKV. Positions 97–111 are enriched in low complexity; it reads ALAGGSAGDGAQAAG. Phosphoserine is present on residues Ser-102, Ser-129, and Ser-140. The span at 132 to 144 shows a compositional bias: pro residues; the sequence is PSLPGTPHSPAPP. Thr-148 carries the post-translational modification Phosphothreonine. A phosphoserine mark is found at Ser-227, Ser-242, Ser-251, Ser-253, Ser-266, and Ser-271. Residues 234–244 are compositionally biased toward polar residues; that stretch reads LAQQGSGSSPK. Residue Lys-285 forms a Glycyl lysine isopeptide (Lys-Gly) (interchain with G-Cter in SUMO2) linkage. A compositionally biased stretch (low complexity) spans 297–310; that stretch reads SSPGSPQSPSSGAE. Glycyl lysine isopeptide (Lys-Gly) (interchain with G-Cter in SUMO2) cross-links involve residues Lys-336 and Lys-372. Position 374 is a phosphoserine (Ser-374). Thr-377 is modified (phosphothreonine). Glycyl lysine isopeptide (Lys-Gly) (interchain with G-Cter in SUMO2) cross-links involve residues Lys-384, Lys-397, and Lys-422. At Ser-433 the chain carries Phosphoserine. Glycyl lysine isopeptide (Lys-Gly) (interchain with G-Cter in SUMO2) cross-links involve residues Lys-435, Lys-439, Lys-451, and Lys-464. The residue at position 495 (Ser-495) is a Phosphoserine. Residues 533–552 form a C2H2-type 1; degenerate zinc finger; it reads YRCLECGDAFSLEKSLARHY. 5 C2H2-type zinc fingers span residues 705 to 727, 764 to 787, 792 to 815, 827 to 849, and 858 to 881; these read NVCPTCPMMLPNRCSFSAHQRMH, YRCPSCSVVFGGVNSIKSHIQTSH, HKCPICPMAFKSGPSAHAHLYSQH, YKCAMCDTVFTHKPLLSSHFDQH, and FKCPSCPLLFAQKRTMLEHLKNTH. Over residues 880 to 890 the composition is skewed to basic and acidic residues; sequence THQSGRLEETA. Residues 880 to 957 are disordered; it reads THQSGRLEET…LGSKGLKGGG (78 aa). Residue Thr-900 is modified to Phosphothreonine. Low complexity predominate over residues 915-925; that stretch reads AAPATEESSSS. A Glycyl lysine isopeptide (Lys-Gly) (interchain with G-Cter in SUMO2) cross-link involves residue Lys-954. 2 C2H2-type zinc fingers span residues 963–986 and 993–1016; these read WTCGLCHSWFPERDEYVAHMKKEH and FPCRLCERSFCSAPSLRRHVRVNH. A Glycyl lysine isopeptide (Lys-Gly) (interchain with G-Cter in SUMO2) cross-link involves residue Lys-1043. A disordered region spans residues 1051–1121; the sequence is LQLGAQSPGR…LRYRSSSSTE (71 aa). The residue at position 1057 (Ser-1057) is a Phosphoserine. Arg-1060 is subject to Omega-N-methylarginine. Residues Ser-1082, Ser-1083, and Ser-1085 each carry the phosphoserine modification. Arg-1101 bears the Omega-N-methylarginine mark. Residues Ser-1106 and Ser-1118 each carry the phosphoserine modification. The C2H2-type 9 zinc-finger motif lies at 1135–1158; sequence QQCLDCGLCFASPGSLSRHRFISH. Positions 1159-1195 are disordered; the sequence is KKRRGVGKASALGLGDGEEEAPPSRSDPDGGDSPLPA. Residues Ser-1184, Ser-1191, and Ser-1211 each carry the phosphoserine modification. The C2H2-type 10 zinc-finger motif lies at 1200-1222; the sequence is LTCKVCGKSCDSPLNLKTHFRTH.

The protein belongs to the krueppel C2H2-type zinc-finger protein family. Interacts with ZMYND8. Widely expressed with highest levels in obvary, muscle, blood and lung.

It is found in the cytoplasm. The protein localises to the nucleus. Its function is as follows. May be involved in transcriptional regulation. This is Zinc finger protein 687 (ZNF687) from Homo sapiens (Human).